The chain runs to 350 residues: Protein RecA (350 aa).

67 to 74 (GPESSGKT) is a binding site for ATP.

The protein belongs to the RecA family.

It is found in the cytoplasm. Functionally, can catalyze the hydrolysis of ATP in the presence of single-stranded DNA, the ATP-dependent uptake of single-stranded DNA by duplex DNA, and the ATP-dependent hybridization of homologous single-stranded DNAs. It interacts with LexA causing its activation and leading to its autocatalytic cleavage. This chain is Protein RecA, found in Chromobacterium violaceum (strain ATCC 12472 / DSM 30191 / JCM 1249 / CCUG 213 / NBRC 12614 / NCIMB 9131 / NCTC 9757 / MK).